The primary structure comprises 233 residues: Ribonuclease HII (233 aa).

The 190-residue stretch at 26–215 folds into the RNase H type-2 domain; the sequence is QLVAGIDEVG…VRASEGEGLE (190 aa). A divalent metal cation-binding residues include Asp-32, Glu-33, and Asp-124. A disordered region spans residues 211-233; that stretch reads GEGLETAAGRQSSEGKKGRRPRG.

Belongs to the RNase HII family. Mn(2+) is required as a cofactor. The cofactor is Mg(2+).

The protein resides in the cytoplasm. The catalysed reaction is Endonucleolytic cleavage to 5'-phosphomonoester.. Its function is as follows. Endonuclease that specifically degrades the RNA of RNA-DNA hybrids. This Syntrophobacter fumaroxidans (strain DSM 10017 / MPOB) protein is Ribonuclease HII.